Here is a 764-residue protein sequence, read N- to C-terminus: Probable cyclic nucleotide-gated ion channel 20, chloroplastic (764 aa).

The transit peptide at 1-25 directs the protein to the chloroplast; the sequence is MASHNENDDIPMLPISDPSSRTRAR. The interval 1–40 is disordered; the sequence is MASHNENDDIPMLPISDPSSRTRARAFTSRSRSVSLSNPT. Residues 19–33 are compositionally biased toward low complexity; it reads SSRTRARAFTSRSRS. At 26–204 the chain is on the stromal side; sequence AFTSRSRSVS…PHAKEVQTWT (179 aa). Residues 205 to 225 form a helical membrane-spanning segment; it reads KFFALSCLLAIFIDPLFFFLI. Topologically, residues 226–242 are lumenal; it reads KVQEQNKCIMIDWPMTK. The helical transmembrane segment at 243–263 threads the bilayer; that stretch reads AFVAVRSVTDVIFTMNILLQF. Residues 264-295 lie on the Stromal side of the membrane; the sequence is RLAYVARESTVVGAGQLVSHPKKIALHYLKGK. Residues 296 to 316 traverse the membrane as a helical segment; that stretch reads FFLDLFIVMPLPQILILWIIP. Residues 317–329 lie on the Lumenal side of the membrane; it reads AHLGASGANYAKN. A helical membrane pass occupies residues 330–350; the sequence is LLRAAVLFQYIPKLYRLLPFL. The Stromal portion of the chain corresponds to 351 to 366; the sequence is AGQTPTGFIFESAWAN. Residues 367-387 traverse the membrane as a helical segment; that stretch reads FVINLLTFMLAGHVVGSCWYL. The Lumenal segment spans residues 388–488; sequence FGLQRVNQCL…GNQVPSYFLG (101 aa). Residues 489 to 509 traverse the membrane as a helical segment; that stretch reads EVFFTMGIIGLGLLLFALLIG. Residues 510–764 are Stromal-facing; the sequence is NMQNFLQALG…LCTPQSSYSL (255 aa). A nucleoside 3',5'-cyclic phosphate contacts are provided by residues 593-710 and Glu658; that span reads IFSL…EDVT. A calmodulin-binding region spans residues 713–729; it reads FSRFLRSHRVQGAIRYD. Positions 734–763 constitute an IQ domain; that stretch reads RLRAARQIQVAWRYRRRRLHRLCTPQSSYS.

Belongs to the cyclic nucleotide-gated cation channel (TC 1.A.1.5) family. In terms of assembly, homotetramer or heterotetramer.

The protein localises to the plastid. It is found in the chloroplast thylakoid membrane. Probable cyclic nucleotide-gated ion channel. This Arabidopsis thaliana (Mouse-ear cress) protein is Probable cyclic nucleotide-gated ion channel 20, chloroplastic (CNGC20).